We begin with the raw amino-acid sequence, 76 residues long: Conotoxin Vc6.3 (76 aa).

Positions 1 to 22 (MKLTCVMIVAVLFLTANTFATA) are cleaved as a signal peptide. The propeptide occupies 23 to 50 (DDPRNGLRDLFSIAHHEMKNPEASKLNE). Cystine bridges form between C52–C66, C59–C70, and C67–C75.

The protein belongs to the conotoxin O1 superfamily. Expressed by the venom duct.

It localises to the secreted. This chain is Conotoxin Vc6.3, found in Conus victoriae (Queen Victoria cone).